A 552-amino-acid polypeptide reads, in one-letter code: Ferry endosomal RAB5 effector complex subunit 3 (552 aa).

Residues 383–403 (LKESLDSGNQNGGNDDKTKNA) are disordered.

Component of the FERRY complex composed of five subunits, TBCK, PPP1R21, FERRY3, CRYZL1 and GATD1 with a ratio of 1:2:1:2:4, respectively.

It is found in the cytoplasm. The protein localises to the early endosome. Its function is as follows. Component of the FERRY complex (Five-subunit Endosomal Rab5 and RNA/ribosome intermediary). The FERRY complex directly interacts with mRNAs and RAB5A, and functions as a RAB5A effector involved in the localization and the distribution of specific mRNAs most likely by mediating their endosomal transport. The complex recruits mRNAs and ribosomes to early endosomes through direct mRNA-interaction. Plays a role in mast cell degranulation. The chain is Ferry endosomal RAB5 effector complex subunit 3 from Homo sapiens (Human).